Reading from the N-terminus, the 428-residue chain is MVKMNMTEKILAEAAGLREVTPGEIIEARVDLAMTHDGTSPPTIRTFRDIASRGGPARVWDPERIVMVFDHNVPANTIGAAEFQRVTREFAREQGIVNIFQNAAGICHQVLPERGFVRPGMVIVGADSHTCTYGAFGAFATGMGATDMAMVFATGKTWFMVPEAMRIEVTGEPEGHVYAKDVILHIIGEIGVDGATYRSVEFTGDTIESMDVSGRMTICNMAVEMGAKNGIMEPNRQTLDYVRARTGREFRVYSSDEDSQYLEDHHFDVSDLEPQVACPDDVDNVYPVHRVEGTHIDEAFLGSCTNGRYEDLKIAAEVIGDRRVHEDVRFIVSPASREIYLKALEDGIIETFIRAGAIVCNPGCGPCLGAHMGVLAPGEVSIATTNRNFRGRMGDPASSVYLANPAVVAESAIEGVISAPQQEAGNGC.

Residues C304, C364, and C367 each contribute to the [4Fe-4S] cluster site.

Belongs to the aconitase/IPM isomerase family. LeuC type 2 subfamily. In terms of assembly, heterotetramer of 2 HacA and 2 HacB proteins.

The catalysed reaction is (2R)-homocitrate = (2R,3S)-homoisocitrate. The enzyme catalyses (2R)-homocitrate = cis-homoaconitate + H2O. It carries out the reaction (2R,3S)-homoisocitrate = cis-homoaconitate + H2O. It catalyses the reaction cis-(homo)2aconitate + H2O = (2R,3S)-iso(homo)2citrate. The catalysed reaction is cis-(homo)3aconitate + H2O = (2R,3S)-iso(homo)3citrate. The protein operates within organic acid metabolism; 2-oxosuberate biosynthesis. Its function is as follows. Component of a hydro-lyase with broad substrate specificity for cis-unsaturated tricarboxylic acids. Catalyzes both the reversible dehydration of (R)-homocitrate ((R)-2-hydroxybutane-1,2,4-tricarboxylate) to produce cis-homoaconitate ((Z)-but-1-ene-1,2,4-tricarboxylate), and its hydration to homoisocitrate ((1R,2S)-1-hydroxybutane-1,2,4-tricarboxylate). Is also able to hydrate the analogous longer chain substrates cis-homo(2)-aconitate, cis-homo(3)-aconitate. These reactions are part of the biosynthesis pathway of coenzyme B. This is Probable methanogen homoaconitase large subunit (hacA) from Methanothermobacter thermautotrophicus (strain ATCC 29096 / DSM 1053 / JCM 10044 / NBRC 100330 / Delta H) (Methanobacterium thermoautotrophicum).